We begin with the raw amino-acid sequence, 100 residues long: Urease subunit gamma (100 aa).

Belongs to the urease gamma subunit family. Heterotrimer of UreA (gamma), UreB (beta) and UreC (alpha) subunits. Three heterotrimers associate to form the active enzyme.

It localises to the cytoplasm. The enzyme catalyses urea + 2 H2O + H(+) = hydrogencarbonate + 2 NH4(+). It participates in nitrogen metabolism; urea degradation; CO(2) and NH(3) from urea (urease route): step 1/1. The polypeptide is Urease subunit gamma (Mycolicibacterium gilvum (strain PYR-GCK) (Mycobacterium gilvum (strain PYR-GCK))).